We begin with the raw amino-acid sequence, 366 residues long: MLIWLVELADHFQFFNLFRYITFRTGAALFTSALIVFLFGPAMIASLRIRQGKGQPIRADGPQTHFKKAGTPTMGGLMILAGIVVSSLLWADLSSIYVVSTLLVTLGFGAIGFYDDYLKVTKQSDKGFSGKARLGIEFVIASIAVFFMMQAALSAGAAGSTFGSSVTFPFFKDLMLNLGYFFVLFGGFVIVGAGNSVNLTDGLDGLAIVPVMIASAAFGLIAYLAGNAVFANYLQIHFVPGTGELAVILGAVIGAGLGFLWFNAPPAAIFMGDTGSLALGGLIGTVAVATKHEIVMVIIGGLFVMETLSVIIQVFWFKRTGHRVFLMAPIHHHFEKKGWTESQVVIRFWIIAVILAMVGLSTLKLR.

The next 10 helical transmembrane spans lie at A27–L47, T71–A91, L93–F113, F138–A158, L174–G194, G205–A225, L245–P265, A268–V288, V297–F317, and Q343–L363.

This sequence belongs to the glycosyltransferase 4 family. MraY subfamily. Mg(2+) serves as cofactor.

It is found in the cell inner membrane. It carries out the reaction UDP-N-acetyl-alpha-D-muramoyl-L-alanyl-gamma-D-glutamyl-meso-2,6-diaminopimeloyl-D-alanyl-D-alanine + di-trans,octa-cis-undecaprenyl phosphate = di-trans,octa-cis-undecaprenyl diphospho-N-acetyl-alpha-D-muramoyl-L-alanyl-D-glutamyl-meso-2,6-diaminopimeloyl-D-alanyl-D-alanine + UMP. It participates in cell wall biogenesis; peptidoglycan biosynthesis. In terms of biological role, catalyzes the initial step of the lipid cycle reactions in the biosynthesis of the cell wall peptidoglycan: transfers peptidoglycan precursor phospho-MurNAc-pentapeptide from UDP-MurNAc-pentapeptide onto the lipid carrier undecaprenyl phosphate, yielding undecaprenyl-pyrophosphoryl-MurNAc-pentapeptide, known as lipid I. This chain is Phospho-N-acetylmuramoyl-pentapeptide-transferase, found in Sinorhizobium medicae (strain WSM419) (Ensifer medicae).